A 182-amino-acid chain; its full sequence is uncharacterized protein (182 aa).

The next 4 helical transmembrane spans lie at 19 to 39 (LFGI…SIVS), 51 to 71 (IYLV…VVFI), 87 to 107 (IFTV…IELF), and 118 to 138 (CSPF…LAMC).

The protein resides in the membrane. This is an uncharacterized protein from Caenorhabditis elegans.